Here is a 141-residue protein sequence, read N- to C-terminus: Nucleoside diphosphate kinase (141 aa).

Residues Lys11, Phe59, Arg87, Thr93, Arg104, and Asn114 each coordinate ATP. His117 (pros-phosphohistidine intermediate) is an active-site residue.

This sequence belongs to the NDK family. Homotetramer. Mg(2+) serves as cofactor.

Its subcellular location is the cytoplasm. The enzyme catalyses a 2'-deoxyribonucleoside 5'-diphosphate + ATP = a 2'-deoxyribonucleoside 5'-triphosphate + ADP. It carries out the reaction a ribonucleoside 5'-diphosphate + ATP = a ribonucleoside 5'-triphosphate + ADP. Its function is as follows. Major role in the synthesis of nucleoside triphosphates other than ATP. The ATP gamma phosphate is transferred to the NDP beta phosphate via a ping-pong mechanism, using a phosphorylated active-site intermediate. The protein is Nucleoside diphosphate kinase of Histophilus somni (strain 2336) (Haemophilus somnus).